A 537-amino-acid chain; its full sequence is Chaperonin GroEL (537 aa).

Residues 31 to 34 (TLGP), 87 to 91 (DGTTT), G415, and D495 contribute to the ATP site.

It belongs to the chaperonin (HSP60) family. Forms a cylinder of 14 subunits composed of two heptameric rings stacked back-to-back. Interacts with the co-chaperonin GroES.

Its subcellular location is the cytoplasm. It carries out the reaction ATP + H2O + a folded polypeptide = ADP + phosphate + an unfolded polypeptide.. Together with its co-chaperonin GroES, plays an essential role in assisting protein folding. The GroEL-GroES system forms a nano-cage that allows encapsulation of the non-native substrate proteins and provides a physical environment optimized to promote and accelerate protein folding. The sequence is that of Chaperonin GroEL from Methanoregula boonei (strain DSM 21154 / JCM 14090 / 6A8).